The primary structure comprises 203 residues: MPKVVFHYFGAKGWARPTMLLAYGGQEFEDHRVEYEQWPEFKPNTPFGQMPVLEIDGKKYAQSLAISRYLGRKYGLAGNDIEEDFEIDQIVDFVNDIRASAASVEYEQDAANKEVKHEENMKNKYPFQLNKLSEIITKNNGFLALGRLTWADFVFVGMFDYLKKMLRMPDLEEQYPIFKKPIETVLSNPKLKAYLDSAPKKEF.

Residues 1–78 (MPKVVFHYFG…YLGRKYGLAG (78 aa)) enclose the GST N-terminal domain. Residues tyrosine 8, tryptophan 38, lysine 42, 48 to 50 (GQM), and 62 to 63 (QS) each bind glutathione. Positions 80–203 (DIEEDFEIDQ…YLDSAPKKEF (124 aa)) constitute a GST C-terminal domain.

It belongs to the GST superfamily. Sigma family. As to quaternary structure, homodimer.

It carries out the reaction RX + glutathione = an S-substituted glutathione + a halide anion + H(+). Functionally, conjugation of reduced glutathione to a wide number of exogenous and endogenous hydrophobic electrophiles. The polypeptide is Glutathione S-transferase 2 (GST2) (Manduca sexta (Tobacco hawkmoth)).